A 182-amino-acid polypeptide reads, in one-letter code: Succinate dehydrogenase cytochrome b560 subunit, mitochondrial (182 aa).

The helical transmembrane segment at 65-94 (LTWMLSGFHRISGCVMAGTLLVGGIGFAVL) threads the bilayer. Over 95-114 (PFDFTAFVDFIRSWNLPCAV) the chain is Mitochondrial intermembrane. Residues 115-139 (TAVFKYIIAFPIIFHTLNGIRFLGF) traverse the membrane as a helical segment. Residue His129 coordinates heme. Over 140–147 (DLAKGVNN) the chain is Mitochondrial matrix. The helical transmembrane segment at 148-169 (VGQIYKSGYLVSGLSAILALAI) threads the bilayer. Residues 170 to 172 (VFN) lie on the Mitochondrial intermembrane side of the membrane.

It belongs to the cytochrome b560 family. In terms of assembly, component of complex II composed of four subunits: a flavoprotein (FP), iron-sulfur protein (IP), and a cytochrome b560 composed of two integral membrane proteins. Heme is required as a cofactor.

The protein localises to the mitochondrion inner membrane. The protein operates within carbohydrate metabolism; tricarboxylic acid cycle. In terms of biological role, membrane-anchoring subunit of succinate dehydrogenase (SDH) that is involved in complex II of the mitochondrial electron transport chain and is responsible for transferring electrons from succinate to ubiquinone (coenzyme Q). Mediates resistance to enteropathogenic E.coli infection. The sequence is that of Succinate dehydrogenase cytochrome b560 subunit, mitochondrial (mev-1) from Caenorhabditis elegans.